The primary structure comprises 202 residues: Nuclear transcription factor Y subunit C-6 (202 aa).

Over residues 1–16 the composition is skewed to low complexity; that stretch reads MAENNNNNGDNMNNDN. Disordered stretches follow at residues 1–29 and 180–202; these read MAEN…LPPM and AWPA…GGGN. Residues 17–29 are compositionally biased toward polar residues; that stretch reads HQQPPSYSQLPPM.

It belongs to the NFYC/HAP5 subunit family. In terms of assembly, heterotrimeric transcription factor composed of three components, NF-YA, NF-YB and NF-YC. NF-YB and NF-YC must interact and dimerize for NF-YA association and DNA binding. Expressed in flowers and siliques.

Its subcellular location is the nucleus. Stimulates the transcription of various genes by recognizing and binding to a CCAAT motif in promoters. In Arabidopsis thaliana (Mouse-ear cress), this protein is Nuclear transcription factor Y subunit C-6 (NFYC6).